A 427-amino-acid polypeptide reads, in one-letter code: Type II methyltransferase M1.BsuMI (427 aa).

Residues 84-427 (INIADLFSGC…SYLLALHQLR (344 aa)) form the SAM-dependent MTase C5-type domain. Residue C176 is part of the active site.

It belongs to the class I-like SAM-binding methyltransferase superfamily. C5-methyltransferase family. In terms of assembly, monomer. May form a complex with YdiP, also seems to be active alone.

It carries out the reaction a 2'-deoxycytidine in DNA + S-adenosyl-L-methionine = a 5-methyl-2'-deoxycytidine in DNA + S-adenosyl-L-homocysteine + H(+). With respect to regulation, somewhat inhibited by MgCl(2) and spermidine, strongly inhibited by MnCl(2). A methylase, recognizes the double-stranded sequence 5'-YTCGAR-3', methylates C-3 on both strands, and protects the DNA from cleavage by the BsuMI endonuclease. This chain is Type II methyltransferase M1.BsuMI (ydiO), found in Bacillus subtilis (strain 168).